Here is a 217-residue protein sequence, read N- to C-terminus: Octanoyltransferase (217 aa).

Residues 32-207 (SESHDELWIV…TFSQLLGYQH (176 aa)) form the BPL/LPL catalytic domain. Residues 71–78 (RGGQVTYH), 138–140 (SLG), and 151–153 (GLA) each bind substrate. The Acyl-thioester intermediate role is filled by C169.

It belongs to the LipB family.

It is found in the cytoplasm. It carries out the reaction octanoyl-[ACP] + L-lysyl-[protein] = N(6)-octanoyl-L-lysyl-[protein] + holo-[ACP] + H(+). It participates in protein modification; protein lipoylation via endogenous pathway; protein N(6)-(lipoyl)lysine from octanoyl-[acyl-carrier-protein]: step 1/2. Its function is as follows. Catalyzes the transfer of endogenously produced octanoic acid from octanoyl-acyl-carrier-protein onto the lipoyl domains of lipoate-dependent enzymes. Lipoyl-ACP can also act as a substrate although octanoyl-ACP is likely to be the physiological substrate. This is Octanoyltransferase from Shewanella baltica (strain OS155 / ATCC BAA-1091).